A 253-amino-acid chain; its full sequence is Pro-opiomelanocortin A (253 aa).

The signal sequence occupies residues 1-21 (MLCPAWLLAVAVVGVVRGVKG). Q22 bears the Pyrrolidone carboxylic acid mark. 2 disulfide bridges follow: C23/C45 and C29/C41. S104 is subject to N-acetylserine; in Corticotropin. A Valine amide modification is found at V116. A disordered region spans residues 228–253 (QKREQWGREEGEEKRALGERKYHFQG). Q252 carries the glutamine amide; partial modification.

It belongs to the POMC family. Specific enzymatic cleavages at paired basic residues yield the different active peptides. Post-translationally, acetylation of beta-endorphin occurs in a tissue-specific manner. C-terminal peptide 1 and C-terminal peptide 2 are detected in the anterior part of the nucleus lateralis tuberis of hypothalamus, in dorsal hypothalamus, thalamus, telencephalon, optic tectum and medulla oblongata (at protein level). Expressed in pituitary and hypothalamus of adult diploid animals, and hypothalamus of triploid and ovulated female trout.

The protein resides in the secreted. Its function is as follows. Stimulates the adrenal glands to release cortisol. Melanocyte-stimulating hormone alpha: Anorexigenic peptide. Increases the pigmentation of skin by increasing melanin production in melanocytes. In terms of biological role, melanocyte-stimulating hormone beta: Increases the pigmentation of skin by increasing melanin production in melanocytes. Functionally, beta-endorphin: Endogenous orexigenic opiate. Its function is as follows. Endogenous opiate. The protein is Pro-opiomelanocortin A (pomca) of Oncorhynchus mykiss (Rainbow trout).